A 709-amino-acid polypeptide reads, in one-letter code: MSGGKSGTKLSSFQNLQQIGQGGFGVVYSAQRENGEKVAIKKIGNAASQTRIKEEIKTMKLLRHRNIVQFYETFFENGETYLVMELCEGGSLMDYVKQKGPLDDSTAVHILRQLIAAVKYIHDENILHRDLSAGNVFIKDATKSTITVKLGDFGLATNLGQHGTACTIVGTPGFIAPQVFGQNYDQAADVYSLGAVLYTMLTKHTPPTKGPPNLESLKKRNPSAADLVERMMHTDARRRIQLKEIVMTDYVKAKMGEATPGSREHSRDSRSQRSREPFRSSRDGISLERRPPARSSSQPVNSRRDPDGYRAAHEMPTTSRTSVEPDRARVRHRLSARGIGSSQEDDLRQQIWPIRMERLVGQRVRTPGGRYIVEMNTRCRFEVVSKGNIVLRILVVEYDPHLLIQTVYVHKMSNRVEHARNETDDLIELTRSPISYTSLSQLPKEVMNDYMRLEKMMVSTIASRVAKITHRRPSQFPDASAQLMENGDLRIRFPNSLIVRRKSNGEVHNYIDGFANNKEEVRGLQLSKVREVYACLTQLEQCLSRMNPTMKILPMVFSAGPDIVATYNNSPSSILPSTSSQASRFPFSEISSSQQLVPHSAPIPNKPLSSRTTSSLNVRNGVSSDENTAPAATRQKYKARLDPVTGRIVSVQAEDNRKLRCSTSKPDQFIFTDPSISSSEQRFMRNGRVPERASEMLHALLVYMKKKQN.

The region spanning phenylalanine 13–valine 251 is the Protein kinase domain. Residues isoleucine 19–valine 27 and lysine 41 contribute to the ATP site. Residue aspartate 130 is the Proton acceptor of the active site. 2 disordered regions span residues lysine 254 to arginine 329 and serine 591 to threonine 633. Composition is skewed to basic and acidic residues over residues serine 262–proline 291 and serine 302–histidine 313. The span at proline 607–asparagine 627 shows a compositional bias: polar residues.

It belongs to the protein kinase superfamily. Ser/Thr protein kinase family.

The protein localises to the cytoplasm. The protein resides in the cytoskeleton. It localises to the microtubule organizing center. Its subcellular location is the centrosome. It is found in the centriole. It catalyses the reaction L-seryl-[protein] + ATP = O-phospho-L-seryl-[protein] + ADP + H(+). The catalysed reaction is L-threonyl-[protein] + ATP = O-phospho-L-threonyl-[protein] + ADP + H(+). Functionally, protein kinase that plays a central role in centrosome duplication. Paternal copy is required to regulate synthesis of daughter centrioles prior to fertilization. Maternal copy regulates centrosome duplication during later cell cycles. Functions upstream of sas-5 and sas-6, and is required for their localization to the centrosome. The polypeptide is Probable serine/threonine-protein kinase zyg-1 (zyg-1) (Caenorhabditis briggsae).